The following is a 111-amino-acid chain: Probable U2 small nuclear ribonucleoprotein B'' (111 aa).

The region spanning 4 to 83 (NTLYVNNLND…KEMKIQYAHS (80 aa)) is the RRM domain.

As to quaternary structure, belongs to the 40S cdc5-associated complex (or cwf complex), a spliceosome sub-complex reminiscent of a late-stage spliceosome composed of the U2, U5 and U6 snRNAs and at least brr2, cdc5, cwf2/prp3, cwf3/syf1, cwf4/syf3, cwf5/ecm2, spp42/cwf6, cwf7/spf27, cwf8, cwf9, cwf10, cwf11, cwf12, prp45/cwf13, cwf14, cwf15, cwf16, cwf17, cwf18, cwf19, cwf20, cwf21, cwf22, cwf23, cwf24, cwf25, cwf26, cyp7/cwf27, cwf28, cwf29/ist3, lea1, msl1, prp5/cwf1, prp10, prp12/sap130, prp17, prp22, sap61, sap62, sap114, sap145, slu7, smb1, smd1, smd3, smf1, smg1 and syf2.

Its subcellular location is the nucleus. Its function is as follows. Involved in pre-mRNA splicing. This protein is associated with snRNP U2. It binds stem loop IV of U2 snRNA. In Schizosaccharomyces pombe (strain 972 / ATCC 24843) (Fission yeast), this protein is Probable U2 small nuclear ribonucleoprotein B'' (msl1).